A 218-amino-acid polypeptide reads, in one-letter code: Adenylate kinase (218 aa).

10-15 serves as a coordination point for ATP; that stretch reads GAGKGT. Positions 30-59 are NMP; that stretch reads STGDMLRAAVKQGTPLGQEAKKVMDAGGLV. AMP-binding positions include T31, R36, 57–59, 85–88, and Q92; these read GLV and GFPR. The LID stretch occupies residues 122–159; the sequence is GRRVHPASGRSYHVRFNPPKQEGLDDVTGEPLVQRDDD. ATP is bound by residues R123 and 132-133; that span reads SY. AMP contacts are provided by R156 and R167. Residue G203 coordinates ATP.

It belongs to the adenylate kinase family. As to quaternary structure, monomer.

The protein resides in the cytoplasm. It catalyses the reaction AMP + ATP = 2 ADP. It participates in purine metabolism; AMP biosynthesis via salvage pathway; AMP from ADP: step 1/1. Its function is as follows. Catalyzes the reversible transfer of the terminal phosphate group between ATP and AMP. Plays an important role in cellular energy homeostasis and in adenine nucleotide metabolism. The chain is Adenylate kinase from Bordetella petrii (strain ATCC BAA-461 / DSM 12804 / CCUG 43448).